A 387-amino-acid polypeptide reads, in one-letter code: Succinyl-diaminopimelate desuccinylase (387 aa).

His73 provides a ligand contact to Zn(2+). Residue Asp75 is part of the active site. Asp106 is a Zn(2+) binding site. Glu141 (proton acceptor) is an active-site residue. Positions 142, 170, and 359 each coordinate Zn(2+).

This sequence belongs to the peptidase M20A family. DapE subfamily. In terms of assembly, homodimer. The cofactor is Zn(2+). Requires Co(2+) as cofactor.

The enzyme catalyses N-succinyl-(2S,6S)-2,6-diaminopimelate + H2O = (2S,6S)-2,6-diaminopimelate + succinate. It functions in the pathway amino-acid biosynthesis; L-lysine biosynthesis via DAP pathway; LL-2,6-diaminopimelate from (S)-tetrahydrodipicolinate (succinylase route): step 3/3. In terms of biological role, catalyzes the hydrolysis of N-succinyl-L,L-diaminopimelic acid (SDAP), forming succinate and LL-2,6-diaminopimelate (DAP), an intermediate involved in the bacterial biosynthesis of lysine and meso-diaminopimelic acid, an essential component of bacterial cell walls. In Methylorubrum populi (strain ATCC BAA-705 / NCIMB 13946 / BJ001) (Methylobacterium populi), this protein is Succinyl-diaminopimelate desuccinylase.